The primary structure comprises 311 residues: Methionyl-tRNA formyltransferase (311 aa).

110 to 113 (SLLP) contacts (6S)-5,6,7,8-tetrahydrofolate.

The protein belongs to the Fmt family.

It catalyses the reaction L-methionyl-tRNA(fMet) + (6R)-10-formyltetrahydrofolate = N-formyl-L-methionyl-tRNA(fMet) + (6S)-5,6,7,8-tetrahydrofolate + H(+). Its function is as follows. Attaches a formyl group to the free amino group of methionyl-tRNA(fMet). The formyl group appears to play a dual role in the initiator identity of N-formylmethionyl-tRNA by promoting its recognition by IF2 and preventing the misappropriation of this tRNA by the elongation apparatus. This is Methionyl-tRNA formyltransferase from Streptococcus pneumoniae serotype 2 (strain D39 / NCTC 7466).